A 700-amino-acid chain; its full sequence is Translation initiation factor IF-2 (700 aa).

The disordered stretch occupies residues 58-85 (KKEVKKQKEPSKEKGKSSEQVKVKEKSK). The tr-type G domain occupies 191 to 365 (PRPPVVTIMG…EMQEIRCIPD (175 aa)). Positions 200–207 (GHVDHGKT) are G1. Residue 200–207 (GHVDHGKT) coordinates GTP. Residues 225–229 (GITQS) form a G2 region. Residues 246 to 249 (DTPG) form a G3 region. Residues 246-250 (DTPGH) and 300-303 (NKID) contribute to the GTP site. The interval 300 to 303 (NKID) is G4. The interval 337–339 (SAK) is G5.

This sequence belongs to the TRAFAC class translation factor GTPase superfamily. Classic translation factor GTPase family. IF-2 subfamily.

The protein resides in the cytoplasm. In terms of biological role, one of the essential components for the initiation of protein synthesis. Protects formylmethionyl-tRNA from spontaneous hydrolysis and promotes its binding to the 30S ribosomal subunits. Also involved in the hydrolysis of GTP during the formation of the 70S ribosomal complex. The polypeptide is Translation initiation factor IF-2 (Petrotoga mobilis (strain DSM 10674 / SJ95)).